An 86-amino-acid chain; its full sequence is Putative regulatory protein BBR47_37350 (86 aa).

Belongs to the RemA family.

This chain is Putative regulatory protein BBR47_37350, found in Brevibacillus brevis (strain 47 / JCM 6285 / NBRC 100599).